A 31-amino-acid chain; its full sequence is Chymotrypsin (31 aa).

Positions 1–31 (IVGGVEAVPGVWPYQAALFIIDMYFCGGSLI) constitute a Peptidase S1 domain.

Belongs to the peptidase S1 family.

Its subcellular location is the secreted. It localises to the extracellular space. It catalyses the reaction Preferential cleavage: Tyr-|-Xaa, Trp-|-Xaa, Phe-|-Xaa, Leu-|-Xaa.. In Penaeus monodon (Giant tiger prawn), this protein is Chymotrypsin.